Consider the following 341-residue polypeptide: Ribulose-5-phosphate reductase 2 (341 aa).

Residues C38, H64, E65, and E144 each coordinate Zn(2+).

Belongs to the zinc-containing alcohol dehydrogenase family. As to quaternary structure, heterodimer together with TarI. It depends on Zn(2+) as a cofactor.

The enzyme catalyses D-ribitol 5-phosphate + NADP(+) = D-ribulose 5-phosphate + NADPH + H(+). It participates in cell wall biogenesis; poly(ribitol phosphate) teichoic acid biosynthesis. Its function is as follows. Catalyzes the NADPH dependent reduction of D-ribulose 5-phosphate to D-ribitol 5-phosphate. The polypeptide is Ribulose-5-phosphate reductase 2 (Staphylococcus aureus (strain NCTC 8325 / PS 47)).